The sequence spans 73 residues: Sec-independent protein translocase protein TatA (73 aa).

A helical membrane pass occupies residues 1–21; sequence MFGLGAPELILILILALIIFG. The disordered stretch occupies residues 52 to 73; sequence EAAKIDDGNNNSDKEKATRQAS.

Belongs to the TatA/E family. In terms of assembly, forms a complex with TatC.

The protein localises to the cell membrane. In terms of biological role, part of the twin-arginine translocation (Tat) system that transports large folded proteins containing a characteristic twin-arginine motif in their signal peptide across membranes. TatA could form the protein-conducting channel of the Tat system. The protein is Sec-independent protein translocase protein TatA of Moorella thermoacetica (strain ATCC 39073 / JCM 9320).